The sequence spans 475 residues: Aspartyl/glutamyl-tRNA(Asn/Gln) amidotransferase subunit B (475 aa).

Belongs to the GatB/GatE family. GatB subfamily. In terms of assembly, heterotrimer of A, B and C subunits.

The enzyme catalyses L-glutamyl-tRNA(Gln) + L-glutamine + ATP + H2O = L-glutaminyl-tRNA(Gln) + L-glutamate + ADP + phosphate + H(+). It catalyses the reaction L-aspartyl-tRNA(Asn) + L-glutamine + ATP + H2O = L-asparaginyl-tRNA(Asn) + L-glutamate + ADP + phosphate + 2 H(+). Functionally, allows the formation of correctly charged Asn-tRNA(Asn) or Gln-tRNA(Gln) through the transamidation of misacylated Asp-tRNA(Asn) or Glu-tRNA(Gln) in organisms which lack either or both of asparaginyl-tRNA or glutaminyl-tRNA synthetases. The reaction takes place in the presence of glutamine and ATP through an activated phospho-Asp-tRNA(Asn) or phospho-Glu-tRNA(Gln). This Staphylococcus aureus (strain MRSA252) protein is Aspartyl/glutamyl-tRNA(Asn/Gln) amidotransferase subunit B.